The primary structure comprises 349 residues: UDP-3-O-acylglucosamine N-acyltransferase (349 aa).

His-243 acts as the Proton acceptor in catalysis.

This sequence belongs to the transferase hexapeptide repeat family. LpxD subfamily. As to quaternary structure, homotrimer.

It carries out the reaction a UDP-3-O-[(3R)-3-hydroxyacyl]-alpha-D-glucosamine + a (3R)-hydroxyacyl-[ACP] = a UDP-2-N,3-O-bis[(3R)-3-hydroxyacyl]-alpha-D-glucosamine + holo-[ACP] + H(+). The protein operates within bacterial outer membrane biogenesis; LPS lipid A biosynthesis. Its function is as follows. Catalyzes the N-acylation of UDP-3-O-acylglucosamine using 3-hydroxyacyl-ACP as the acyl donor. Is involved in the biosynthesis of lipid A, a phosphorylated glycolipid that anchors the lipopolysaccharide to the outer membrane of the cell. This is UDP-3-O-acylglucosamine N-acyltransferase from Myxococcus xanthus (strain DK1622).